Here is a 206-residue protein sequence, read N- to C-terminus: Pyridoxine/pyridoxamine 5'-phosphate oxidase (206 aa).

FMN-binding positions include 53–58 (RMVLLK), 68–69 (YT), K75, and Q97. K58 serves as a coordination point for substrate. Residues Y115, R119, and S123 each contribute to the substrate site. FMN contacts are provided by residues 132 to 133 (QS) and W177. Residue 183 to 185 (RLH) coordinates substrate. R187 serves as a coordination point for FMN.

This sequence belongs to the pyridoxamine 5'-phosphate oxidase family. In terms of assembly, homodimer. The cofactor is FMN.

It carries out the reaction pyridoxamine 5'-phosphate + O2 + H2O = pyridoxal 5'-phosphate + H2O2 + NH4(+). The enzyme catalyses pyridoxine 5'-phosphate + O2 = pyridoxal 5'-phosphate + H2O2. Its pathway is cofactor metabolism; pyridoxal 5'-phosphate salvage; pyridoxal 5'-phosphate from pyridoxamine 5'-phosphate: step 1/1. The protein operates within cofactor metabolism; pyridoxal 5'-phosphate salvage; pyridoxal 5'-phosphate from pyridoxine 5'-phosphate: step 1/1. Its function is as follows. Catalyzes the oxidation of either pyridoxine 5'-phosphate (PNP) or pyridoxamine 5'-phosphate (PMP) into pyridoxal 5'-phosphate (PLP). This chain is Pyridoxine/pyridoxamine 5'-phosphate oxidase, found in Rhizobium meliloti (strain 1021) (Ensifer meliloti).